The sequence spans 533 residues: MSLQPLTAVNCGSLLQPGCSLLQLDGDIFLFGQKGWPRRSCPTGVFGVRLKHGELKLRPISSSNDSCYLPPLRCPALTRLEPHDGHPEGYLIHGGRTPNNEISSSLYLLTLDSRGCNRKVTLRCQERELVGEQPGPRYGHTLSMVQSLGKRACVVFGGRSYMPAGERTTENWNSVVDCPPQVFIIDLEFGCCSAHTLPELTDGQSFHLALARDDYVYFLGGQSLSLDFRPPRVYSLRDGVPEGKPAVSCSTWTPSMSISSAIATRVGPSHEFIILGGYQLETQKRMECSSVVLDDSGINIEPREAPEWTGEIKHNHTWFGGSMGGGSALIGIPSEGRQATPEAHYFYQVCFQKEGEGKGEDGNQVCSQESTDFEDSAPLEDSEELYFGREPHELEDSSEGEGDTYNEEDEEDESQTGYWVKCCLGCQVDPNTWEPYYSTELLRPAMIYCSKGEGGHWVHAQCMELTEGLLVRLSQGNGKYFCLDHGGLPRQEMTPPRQVLSLKRSPMKPQHRKGPMMRRMTPAKKRFFRRLFE.

The tract at residues 358–413 (KGEDGNQVCSQESTDFEDSAPLEDSEELYFGREPHELEDSSEGEGDTYNEEDEEDE) is disordered. Acidic residues predominate over residues 371 to 384 (TDFEDSAPLEDSEE). A compositionally biased stretch (basic and acidic residues) spans 386–395 (YFGREPHELE). A compositionally biased stretch (acidic residues) spans 396–413 (DSSEGEGDTYNEEDEEDE). A PHD-type; atypical zinc finger spans residues 419-488 (WVKCCLGCQV…KYFCLDHGGL (70 aa)). 8 residues coordinate Zn(2+): C422, C426, C449, H456, H459, C462, C482, and H485. Residues 496 to 517 (PRQVLSLKRSPMKPQHRKGPMM) form a disordered region. Over residues 505–517 (SPMKPQHRKGPMM) the composition is skewed to basic residues.

The protein belongs to the RAG2 family. Component of the RAG complex composed of core components rag1 and rag2.

Its subcellular location is the nucleus. In terms of biological role, core component of the RAG complex, a multiprotein complex that mediates the DNA cleavage phase during V(D)J recombination. V(D)J recombination assembles a diverse repertoire of immunoglobulin and T-cell receptor genes in developing B and T lymphocytes through rearrangement of different V (variable), in some cases D (diversity), and J (joining) gene segments. DNA cleavage by the RAG complex occurs in 2 steps: a first nick is introduced in the top strand immediately upstream of the heptamer, generating a 3'-hydroxyl group that can attack the phosphodiester bond on the opposite strand in a direct transesterification reaction, thereby creating 4 DNA ends: 2 hairpin coding ends and 2 blunt, 5'-phosphorylated ends. In the RAG complex, rag2 is not the catalytic component but is required for all known catalytic activities mediated by RAG1. It probably acts as a sensor of chromatin state that recruits the RAG complex to H3K4me3. The chain is V(D)J recombination-activating protein 2 (rag2) from Oncorhynchus mykiss (Rainbow trout).